We begin with the raw amino-acid sequence, 463 residues long: NF-kappa-B-activating protein (463 aa).

Over residues 1-14 (MRSRSRSRSRQRER) the composition is skewed to basic residues. The disordered stretch occupies residues 1 to 358 (MRSRSRSRSR…GGSLNQKDFG (358 aa)). Composition is skewed to basic and acidic residues over residues 15 to 29 (RRSD…ERRT) and 39 to 71 (VSRE…DAVP). Over residues 78-98 (SSPSRSSSSSSSDRSSSSRSP) the composition is skewed to low complexity. The segment covering 107 to 125 (KSVERWPNDRYHENNDRRQ) has biased composition (basic and acidic residues). A phosphoserine mark is found at Ser-136, Ser-189, and Ser-191. Thr-195 bears the Phosphothreonine mark. The segment covering 208-238 (PKKKKKKGKRKHKKSEKKSKKKSKKSKKKKS) has biased composition (basic residues). Low complexity predominate over residues 241–267 (ESSSSSSSSSSEDSSDESSSSSSSSSS). Acidic residues predominate over residues 268–278 (DSEDESEEEDV). Basic and acidic residues predominate over residues 279–288 (WLEKTADGIK). Positions 289–312 (KPKKKKSSTSKKDKKSKKKKKKRK) are enriched in basic residues. Positions 330-340 (KNKESASHNDE) are enriched in basic and acidic residues.

This sequence belongs to the NKAP family.

The protein resides in the nucleus. Its function is as follows. Tumor suppressor involved in maintaining genome integrity. Influences gene expression and mRNA splicing. This Drosophila melanogaster (Fruit fly) protein is NF-kappa-B-activating protein.